A 306-amino-acid polypeptide reads, in one-letter code: tRNA dimethylallyltransferase (306 aa).

2–9 (GPTASGKT) serves as a coordination point for ATP. 4 to 9 (TASGKT) contributes to the substrate binding site. 2 interaction with substrate tRNA regions span residues 27–30 (DSVQ) and 152–156 (QRIVR).

It belongs to the IPP transferase family. In terms of assembly, monomer. Mg(2+) serves as cofactor.

It carries out the reaction adenosine(37) in tRNA + dimethylallyl diphosphate = N(6)-dimethylallyladenosine(37) in tRNA + diphosphate. In terms of biological role, catalyzes the transfer of a dimethylallyl group onto the adenine at position 37 in tRNAs that read codons beginning with uridine, leading to the formation of N6-(dimethylallyl)adenosine (i(6)A). This chain is tRNA dimethylallyltransferase, found in Magnetococcus marinus (strain ATCC BAA-1437 / JCM 17883 / MC-1).